A 230-amino-acid polypeptide reads, in one-letter code: Cytochrome c oxidase subunit 2 (230 aa).

Residues 1 to 14 lie on the Mitochondrial intermembrane side of the membrane; sequence MAHPAQLGFQDAAS. A helical transmembrane segment spans residues 15 to 45; the sequence is PVMEELLCFHDHALMIVFLISTLVLYIIIAM. Residues 46–59 lie on the Mitochondrial matrix side of the membrane; sequence VSTKLTNKFILDSQ. The chain crosses the membrane as a helical span at residues 60–87; sequence EIEIVWTVLPAIILILIALPSLRILYLM. Over 88-230 the chain is Mitochondrial intermembrane; that stretch reads DEINDPHVTI…NWSSAMLEDA (143 aa). Residues H161, C196, E198, C200, H204, and M207 each coordinate Cu cation. E198 provides a ligand contact to Mg(2+).

Belongs to the cytochrome c oxidase subunit 2 family. Component of the cytochrome c oxidase (complex IV, CIV), a multisubunit enzyme composed of 14 subunits. The complex is composed of a catalytic core of 3 subunits MT-CO1, MT-CO2 and MT-CO3, encoded in the mitochondrial DNA, and 11 supernumerary subunits COX4I, COX5A, COX5B, COX6A, COX6B, COX6C, COX7A, COX7B, COX7C, COX8 and NDUFA4, which are encoded in the nuclear genome. The complex exists as a monomer or a dimer and forms supercomplexes (SCs) in the inner mitochondrial membrane with NADH-ubiquinone oxidoreductase (complex I, CI) and ubiquinol-cytochrome c oxidoreductase (cytochrome b-c1 complex, complex III, CIII), resulting in different assemblies (supercomplex SCI(1)III(2)IV(1) and megacomplex MCI(2)III(2)IV(2)). Found in a complex with TMEM177, COA6, COX18, COX20, SCO1 and SCO2. Interacts with TMEM177 in a COX20-dependent manner. Interacts with COX20. Interacts with COX16. Cu cation serves as cofactor.

The protein localises to the mitochondrion inner membrane. It carries out the reaction 4 Fe(II)-[cytochrome c] + O2 + 8 H(+)(in) = 4 Fe(III)-[cytochrome c] + 2 H2O + 4 H(+)(out). Component of the cytochrome c oxidase, the last enzyme in the mitochondrial electron transport chain which drives oxidative phosphorylation. The respiratory chain contains 3 multisubunit complexes succinate dehydrogenase (complex II, CII), ubiquinol-cytochrome c oxidoreductase (cytochrome b-c1 complex, complex III, CIII) and cytochrome c oxidase (complex IV, CIV), that cooperate to transfer electrons derived from NADH and succinate to molecular oxygen, creating an electrochemical gradient over the inner membrane that drives transmembrane transport and the ATP synthase. Cytochrome c oxidase is the component of the respiratory chain that catalyzes the reduction of oxygen to water. Electrons originating from reduced cytochrome c in the intermembrane space (IMS) are transferred via the dinuclear copper A center (CU(A)) of subunit 2 and heme A of subunit 1 to the active site in subunit 1, a binuclear center (BNC) formed by heme A3 and copper B (CU(B)). The BNC reduces molecular oxygen to 2 water molecules using 4 electrons from cytochrome c in the IMS and 4 protons from the mitochondrial matrix. The polypeptide is Cytochrome c oxidase subunit 2 (mt-co2) (Danio rerio (Zebrafish)).